A 254-amino-acid polypeptide reads, in one-letter code: Thiazole synthase (254 aa).

Catalysis depends on K95, which acts as the Schiff-base intermediate with DXP. 1-deoxy-D-xylulose 5-phosphate contacts are provided by residues G156, 182-183 (AG), and 204-205 (NT).

It belongs to the ThiG family. In terms of assembly, homotetramer. Forms heterodimers with either ThiH or ThiS.

Its subcellular location is the cytoplasm. It catalyses the reaction [ThiS sulfur-carrier protein]-C-terminal-Gly-aminoethanethioate + 2-iminoacetate + 1-deoxy-D-xylulose 5-phosphate = [ThiS sulfur-carrier protein]-C-terminal Gly-Gly + 2-[(2R,5Z)-2-carboxy-4-methylthiazol-5(2H)-ylidene]ethyl phosphate + 2 H2O + H(+). The protein operates within cofactor biosynthesis; thiamine diphosphate biosynthesis. Catalyzes the rearrangement of 1-deoxy-D-xylulose 5-phosphate (DXP) to produce the thiazole phosphate moiety of thiamine. Sulfur is provided by the thiocarboxylate moiety of the carrier protein ThiS. In vitro, sulfur can be provided by H(2)S. The protein is Thiazole synthase of Shewanella sediminis (strain HAW-EB3).